The primary structure comprises 500 residues: Probable malate:quinone oxidoreductase (500 aa).

It belongs to the MQO family. FAD serves as cofactor.

The enzyme catalyses (S)-malate + a quinone = a quinol + oxaloacetate. It functions in the pathway carbohydrate metabolism; tricarboxylic acid cycle; oxaloacetate from (S)-malate (quinone route): step 1/1. This is Probable malate:quinone oxidoreductase from Bacillus anthracis (strain A0248).